The chain runs to 60 residues: Small ribosomal subunit protein bS21 (60 aa).

The tract at residues 41 to 60 (PEEKRKRKAIARRRQRSRRR) is disordered. The segment covering 45–60 (RKRKAIARRRQRSRRR) has biased composition (basic residues).

Belongs to the bacterial ribosomal protein bS21 family.

The chain is Small ribosomal subunit protein bS21 from Gloeothece citriformis (strain PCC 7424) (Cyanothece sp. (strain PCC 7424)).